The sequence spans 398 residues: Dual-specificity RNA methyltransferase RlmN (398 aa).

Glu-121 functions as the Proton acceptor in the catalytic mechanism. The Radical SAM core domain occupies 127 to 370; that stretch reads ETDRGTLCVS…VRTPRGRDIL (244 aa). Cys-134 and Cys-373 are joined by a disulfide. 3 residues coordinate [4Fe-4S] cluster: Cys-141, Cys-145, and Cys-148. S-adenosyl-L-methionine contacts are provided by residues 199–200, Ser-231, 253–255, and Asn-330; these read GE and SLH. The active-site S-methylcysteine intermediate is Cys-373.

This sequence belongs to the radical SAM superfamily. RlmN family. [4Fe-4S] cluster is required as a cofactor.

The protein resides in the cytoplasm. It catalyses the reaction adenosine(2503) in 23S rRNA + 2 reduced [2Fe-2S]-[ferredoxin] + 2 S-adenosyl-L-methionine = 2-methyladenosine(2503) in 23S rRNA + 5'-deoxyadenosine + L-methionine + 2 oxidized [2Fe-2S]-[ferredoxin] + S-adenosyl-L-homocysteine. It carries out the reaction adenosine(37) in tRNA + 2 reduced [2Fe-2S]-[ferredoxin] + 2 S-adenosyl-L-methionine = 2-methyladenosine(37) in tRNA + 5'-deoxyadenosine + L-methionine + 2 oxidized [2Fe-2S]-[ferredoxin] + S-adenosyl-L-homocysteine. In terms of biological role, specifically methylates position 2 of adenine 2503 in 23S rRNA and position 2 of adenine 37 in tRNAs. m2A2503 modification seems to play a crucial role in the proofreading step occurring at the peptidyl transferase center and thus would serve to optimize ribosomal fidelity. This is Dual-specificity RNA methyltransferase RlmN from Rhodopseudomonas palustris (strain BisB5).